A 187-amino-acid chain; its full sequence is LSM complex subunit LSM4 (187 aa).

The 84-residue stretch at 2–85 (LPLYLLTNAK…IKFIKLQDNI (84 aa)) folds into the Sm domain. The interval 93-187 (INSNNNSNSN…NSSSPQKVEF (95 aa)) is disordered. The span at 112–167 (NRDSNNNRGNYNRRNNNNGNSNRRPYSQNRQYNNSNSSNINNSINSINSNNQNMNN) shows a compositional bias: low complexity. Arginine 119 carries the omega-N-methylarginine modification. Positions 175–187 (HHFNSSSPQKVEF) are enriched in polar residues. Phosphoserine is present on serine 181.

This sequence belongs to the snRNP Sm proteins family. In terms of assembly, component of the heptameric LSM1-LSM7 complex that forms a seven-membered ring structure with a donut shape. The LSm subunits are arranged in the order LSM1, LSM2, LSM3, LSM6, LSM5, LSM7 and LSM4. Except for LSM1, where a C-terminal helix crosses the ring structure to form additional interactions with LSM3 and LSM6, each subunit interacts only with its two neighboring subunits. The LSM1-LSM7 complex interacts with PAT1; within the complex PAT1 has direct interactions with LSM2 and LSM3. The LSM1-LSM7 complex interacts with XRN1. Component of the heptameric LSM2-LSM8 complex that forms a seven-membered ring structure with a donut shape; an RNA strand can pass through the hole in the center of the ring structure. The LSm subunits are arranged in the order LSM8, LSM2, LSM3, LSM6, LSM5, LSM7 and LSM4. Component of the spliceosome U4/U6-U5 tri-snRNP complex composed of the U4, U6 and U5 snRNAs and at least PRP3, PRP4, PRP6, PRP8, PRP18, PRP31, PRP38, SNU13, SNU23, SNU66, SNU114, SPP381, SMB1, SMD1, SMD2, SMD3, SMX2, SMX3, LSM2, LSM3, LSM4, LSM5, LSM6, LSM7, LSM8, BRR2 and DIB1. May be found in a complex comprising LSM2-LSM7 without LSM1 or LSM8; the complex associates with pre-P RNA and snoRNA SNR5.

It localises to the nucleus. The protein localises to the cytoplasm. In terms of biological role, component of LSm protein complexes, which are involved in RNA processing and may function in a chaperone-like manner. Component of the cytoplasmic LSM1-LSM7 complex which is involved in mRNA degradation by activating the decapping step. Together with PAT1, the LSM1-LSM7 complex binds to osmotic stress-activated mRNAs to attenuate the osmotic stress response, probably by limiting ribosome access to the mRNA and consequently translation. Component of the nuclear LSM2-LSM8 complex, which is involved in spliceosome assembly. The LSM2-LSM8 complex plays a role in the biogenesis of the spliceosomal U4/U6-U5 tri-snRNP complex by accelerating PRP24-mediated annealing of U4/U6 di-snRNA. The LSM2-LSM8 complex binds U6 snRNA terminating with a non-cyclic 3' phosphate group. LSM2-LSM8 is probably also involved in degradation of nuclear pre-mRNA by targeting them for decapping. LSM2-LSM8 could be involved in processing of pre-tRNAs, pre-rRNAs and U3 snoRNA, although involvement may be indirect. In a complex that probably contains LSM2-LSM7, but not LSM1 or LSM8, associates with the precursor of the RNA component of RNase P (pre-P RNA) and may be involved in maturing pre-P RNA; the complex also associates with snoRNA SNR5. In Saccharomyces cerevisiae (strain ATCC 204508 / S288c) (Baker's yeast), this protein is LSM complex subunit LSM4.